A 225-amino-acid polypeptide reads, in one-letter code: Ribosomal RNA small subunit methyltransferase G (225 aa).

S-adenosyl-L-methionine contacts are provided by residues G71, L76, 121–122 (AE), and R139. A disordered region spans residues 204-225 (VVEARRATPSNGRGRPGRSSRR).

The protein belongs to the methyltransferase superfamily. RNA methyltransferase RsmG family.

The protein localises to the cytoplasm. Functionally, specifically methylates the N7 position of guanine in position 518 of 16S rRNA. This chain is Ribosomal RNA small subunit methyltransferase G, found in Mycobacterium sp. (strain KMS).